The following is a 400-amino-acid chain: NADH-quinone oxidoreductase subunit D (400 aa).

This sequence belongs to the complex I 49 kDa subunit family. NDH-1 is composed of 14 different subunits. Subunits NuoB, C, D, E, F, and G constitute the peripheral sector of the complex.

It localises to the cell inner membrane. It carries out the reaction a quinone + NADH + 5 H(+)(in) = a quinol + NAD(+) + 4 H(+)(out). In terms of biological role, NDH-1 shuttles electrons from NADH, via FMN and iron-sulfur (Fe-S) centers, to quinones in the respiratory chain. The immediate electron acceptor for the enzyme in this species is believed to be ubiquinone. Couples the redox reaction to proton translocation (for every two electrons transferred, four hydrogen ions are translocated across the cytoplasmic membrane), and thus conserves the redox energy in a proton gradient. The polypeptide is NADH-quinone oxidoreductase subunit D (Granulibacter bethesdensis (strain ATCC BAA-1260 / CGDNIH1)).